Here is a 593-residue protein sequence, read N- to C-terminus: Aspartate--tRNA(Asp/Asn) ligase (593 aa).

E173 contributes to the L-aspartate binding site. An aspartate region spans residues 197 to 200 (QLFK). Residue R219 participates in L-aspartate binding. Residues 219–221 (RDE) and Q228 each bind ATP. H451 serves as a coordination point for L-aspartate. Residue E485 coordinates ATP. Residue R492 coordinates L-aspartate. Residue 537–540 (GIDR) participates in ATP binding.

It belongs to the class-II aminoacyl-tRNA synthetase family. Type 1 subfamily. In terms of assembly, homodimer.

It is found in the cytoplasm. The enzyme catalyses tRNA(Asx) + L-aspartate + ATP = L-aspartyl-tRNA(Asx) + AMP + diphosphate. Its function is as follows. Aspartyl-tRNA synthetase with relaxed tRNA specificity since it is able to aspartylate not only its cognate tRNA(Asp) but also tRNA(Asn). Reaction proceeds in two steps: L-aspartate is first activated by ATP to form Asp-AMP and then transferred to the acceptor end of tRNA(Asp/Asn). This Legionella pneumophila (strain Paris) protein is Aspartate--tRNA(Asp/Asn) ligase.